Here is a 160-residue protein sequence, read N- to C-terminus: Large ribosomal subunit protein eL21 (160 aa).

It belongs to the eukaryotic ribosomal protein eL21 family.

This Encephalitozoon cuniculi (strain GB-M1) (Microsporidian parasite) protein is Large ribosomal subunit protein eL21 (RPL21).